The chain runs to 267 residues: tRNA pseudouridine synthase A (267 aa).

Asp55 functions as the Nucleophile in the catalytic mechanism. Tyr111 contacts substrate.

The protein belongs to the tRNA pseudouridine synthase TruA family.

The catalysed reaction is uridine(38/39/40) in tRNA = pseudouridine(38/39/40) in tRNA. Functionally, formation of pseudouridine at positions 38, 39 and 40 in the anticodon stem and loop of transfer RNAs. The protein is tRNA pseudouridine synthase A of Thermococcus kodakarensis (strain ATCC BAA-918 / JCM 12380 / KOD1) (Pyrococcus kodakaraensis (strain KOD1)).